A 567-amino-acid chain; its full sequence is uncharacterized protein (567 aa).

At 1–31 the chain is on the lumenal side; that stretch reads MLDTILINVFRRDGDDDDDDGQDPALQELYS. Residues 32–52 traverse the membrane as a helical segment; that stretch reads SWALFILLVLLIGALLTSYYV. Topologically, residues 53-64 are cytoplasmic; the sequence is QSKKIRAIHETV. The chain crosses the membrane as a helical span at residues 65–85; sequence ISVFVGMVVGLIIRVSPGLII. Residues 86–87 lie on the Lumenal side of the membrane; it reads QN. A helical transmembrane segment spans residues 88–108; sequence MVSFHSTYFFNVLLPPIILNS. Over 109-128 the chain is Cytoplasmic; that stretch reads GYELHQSNFFRNIGTILTFA. A helical membrane pass occupies residues 129-149; that stretch reads FAGTFISAVTLGVLVYIFSFL. At 150 to 159 the chain is on the lumenal side; that stretch reads NFENLSMTFV. The helical transmembrane segment at 160–180 threads the bilayer; it reads EALSMGATLSATDPVTVLAIF. Over 181 to 188 the chain is Cytoplasmic; that stretch reads NSYKVDQK. A helical transmembrane segment spans residues 189–209; the sequence is LYTIIFGESILNDAVAIVMFE. Residues 210 to 227 lie on the Lumenal side of the membrane; sequence TLQQFQGKTLHFFTLFSG. Residues 228-248 traverse the membrane as a helical segment; it reads IGIFIITFFISLLIGVSIGLI. Over 249 to 277 the chain is Cytoplasmic; that stretch reads TALLLKYSYLRRYPSIESCIILLMAYTSY. Residues 278–298 form a helical membrane-spanning segment; sequence FFSNGCHMSGVVSLLFCGITL. The Lumenal portion of the chain corresponds to 299–315; it reads KHYAFFNMSYKAKLSTK. A helical transmembrane segment spans residues 316–338; sequence YVFRVLAQLSENFIFIYLGMSLF. At 339-347 the chain is on the cytoplasmic side; it reads TQVDLVYKP. A helical membrane pass occupies residues 348-366; sequence IFILITTVAVTASRYMNVF. The Lumenal segment spans residues 367-392; that stretch reads PLSNLLNKFHRQRNGNLIDHIPYSYQ. A helical transmembrane segment spans residues 393 to 413; that stretch reads MMLFWAGLRGAVGVALAAGFE. Topologically, residues 414 to 424 are cytoplasmic; that stretch reads GENAQTLRATT. Residues 425 to 445 traverse the membrane as a helical segment; the sequence is LVVVVLTLIIFGGTTARMLEI. Over 446-567 the chain is Lumenal; it reads LHIETGVAAD…RDNLKNGTKK (122 aa). Phosphoserine is present on S515.

It belongs to the monovalent cation:proton antiporter 1 (CPA1) transporter (TC 2.A.36) family.

The protein resides in the golgi apparatus membrane. This is an uncharacterized protein from Schizosaccharomyces pombe (strain 972 / ATCC 24843) (Fission yeast).